The primary structure comprises 414 residues: uncharacterized protein (414 aa).

This sequence belongs to the MG032/MG096/MG288 family.

This is an uncharacterized protein from Mycoplasma genitalium (strain ATCC 33530 / DSM 19775 / NCTC 10195 / G37) (Mycoplasmoides genitalium).